We begin with the raw amino-acid sequence, 1362 residues long: DNA-directed RNA polymerase subunit beta' (1362 aa).

Over residues 1–14 (MTSSSKSRKSKSSK) the composition is skewed to basic residues. The tract at residues 1-39 (MTSSSKSRKSKSSKASKAAKEAPVSASRPLSKTPPPFRN) is disordered. Positions 15–27 (ASKAAKEAPVSAS) are enriched in low complexity. Zn(2+) contacts are provided by Cys-248, Cys-315, Cys-322, and Cys-325. The disordered stretch occupies residues 1316–1336 (TRHNIDPSASNFAAFTRPDAD).

This sequence belongs to the RNA polymerase beta' chain family. RpoC2 subfamily. As to quaternary structure, in cyanobacteria the RNAP catalytic core is composed of 2 alpha, 1 beta, 1 beta', 1 gamma and 1 omega subunit. When a sigma factor is associated with the core the holoenzyme is formed, which can initiate transcription. Requires Zn(2+) as cofactor.

It catalyses the reaction RNA(n) + a ribonucleoside 5'-triphosphate = RNA(n+1) + diphosphate. In terms of biological role, DNA-dependent RNA polymerase catalyzes the transcription of DNA into RNA using the four ribonucleoside triphosphates as substrates. This is DNA-directed RNA polymerase subunit beta' from Synechococcus sp. (strain CC9605).